Here is a 370-residue protein sequence, read N- to C-terminus: MSSCKDSLSLMAMWGSIARFDPKHERSFEGPEKRLEVIMRVVDGTHVSGLLAHDDDVWQKVIDAICAHIVSREFNEYIRSYVLSESSLFVMKDRVILITCGTITLLNCVPLICEAVSTVCGEVEWVSFMHKNYSFPWEQKGPHLSMAEEFKTLRSHFPSGQPFIFGPIDSDHYFLYFHSDVVQPSCSDDAQLSMTMYGLDRNQTKHWYSDKMLPTGPETAVIREATGLSEVVDDSWILHDLQYEPCGYSINAIRGSEYQTIHITPEEHCSFASYETNTCALNYSKCICGVLRVFDPERFSVIVFIDPDSAVGKSYHSGGTIGVEPEYYPNYEAHHRTVNEYTPGHWVLKVNYVKRAVGTVGTSAASGAKE.

Substrate is bound at residue phenylalanine 28. Active-site residues include glutamate 29 and glutamate 32. Residue glutamate 85 participates in substrate binding. The active-site Schiff-base intermediate with substrate; via pyruvic acid is serine 86. Serine 86 bears the Pyruvic acid (Ser); by autocatalysis mark. The Proton donor; for catalytic activity role is filled by cysteine 100. Active-site proton acceptor; for processing activity residues include serine 249 and histidine 262. Glutamate 266 is a binding site for substrate.

Belongs to the eukaryotic AdoMetDC family. In terms of assembly, forms a heterodimer with catalytically inactive AdoMetDC prozyme; heterodimerization is required to activate AdoMetDC. Pyruvate is required as a cofactor. Is synthesized initially as an inactive proenzyme. Formation of the active enzyme involves a self-maturation process in which the active site pyruvoyl group is generated from an internal serine residue via an autocatalytic post-translational modification. Two non-identical subunits are generated from the proenzyme in this reaction, and the pyruvate is formed at the N-terminus of the alpha chain, which is derived from the carboxyl end of the proenzyme. The post-translation cleavage follows an unusual pathway, termed non-hydrolytic serinolysis, in which the side chain hydroxyl group of the serine supplies its oxygen atom to form the C-terminus of the beta chain, while the remainder of the serine residue undergoes an oxidative deamination to produce ammonia and the pyruvoyl group blocking the N-terminus of the alpha chain.

It carries out the reaction S-adenosyl-L-methionine + H(+) = S-adenosyl 3-(methylsulfanyl)propylamine + CO2. The protein operates within amine and polyamine biosynthesis; S-adenosylmethioninamine biosynthesis; S-adenosylmethioninamine from S-adenosyl-L-methionine: step 1/1. Allosterically activated by AdoMetDC prozyme. Activated by putrescine and to a lesser extent by spermidine, norspermidine and spermine. Inhibited by 5'-([(Z)-4-amino-2-butenyl]methylamino)-5'-deoxyadenosine (MDL 73811). Functionally, in association with the catalytically inactive AdoMetDC prozyme, catalyzes the decarboxylation of S-adenosyl-L-methionine which is essential for the biosynthesis of the polyamine spermidine. Required for growth and survival during the bloodstream life cycle stage. The chain is S-adenosylmethionine decarboxylase proenzyme from Trypanosoma brucei brucei.